An 86-amino-acid chain; its full sequence is Protein Tat (86 aa).

An interaction with human CREBBP region spans residues 1 to 24; that stretch reads MDPVDPNQEPWNHPGSQPRTACNN. Residues 1–48 form a transactivation region; sequence MDPVDPNQEPWNHPGSQPRTACNNCYCKKCCYHCQLCFLKKGLGIYYG. The Zn(2+) site is built by Cys-22, Cys-25, and Cys-27. Residues 22 to 37 are cysteine-rich; it reads CNNCYCKKCCYHCQLC. N6-acetyllysine; by host PCAF is present on Lys-28. Zn(2+) contacts are provided by Cys-30, His-33, Cys-34, and Cys-37. The tract at residues 38-48 is core; that stretch reads FLKKGLGIYYG. Positions 48-58 are enriched in basic residues; that stretch reads GRKKRRQRRGT. The tract at residues 48 to 86 is disordered; sequence GRKKRRQRRGTPKSLQDHQTLIPKQPLSRTSGDPTGPEK. The Nuclear localization signal, RNA-binding (TAR), and protein transduction signature appears at 49–57; the sequence is RKKRRQRRG. Residues 49 to 86 form an interaction with the host capping enzyme RNGTT region; sequence RKKRRQRRGTPKSLQDHQTLIPKQPLSRTSGDPTGPEK. Lys-50 and Lys-51 each carry N6-acetyllysine; by host EP300 and GCN5L2. 2 positions are modified to asymmetric dimethylarginine; by host PRMT6: Arg-52 and Arg-53. Residue Lys-71 forms a Glycyl lysine isopeptide (Lys-Gly) (interchain with G-Cter in ubiquitin) linkage.

Belongs to the lentiviruses Tat family. As to quaternary structure, interacts with host CCNT1. Associates with the P-TEFb complex composed at least of Tat, P-TEFb (CDK9 and CCNT1), TAR RNA, RNA Pol II. Recruits the HATs CREBBP, TAF1/TFIID, EP300, PCAF and GCN5L2. Interacts with host KAT5/Tip60; this interaction targets the latter to degradation. Interacts with the host deacetylase SIRT1. Interacts with host capping enzyme RNGTT; this interaction stimulates RNGTT. Binds to host KDR, and to the host integrins ITGAV/ITGB3 and ITGA5/ITGB1. Interacts with host KPNB1/importin beta-1 without previous binding to KPNA1/importin alpha-1. Interacts with EIF2AK2. Interacts with host nucleosome assembly protein NAP1L1; this interaction may be required for the transport of Tat within the nucleus, since the two proteins interact at the nuclear rim. Interacts with host C1QBP/SF2P32; this interaction involves lysine-acetylated Tat. Interacts with the host chemokine receptors CCR2, CCR3 and CXCR4. Interacts with host DPP4/CD26; this interaction may trigger an anti-proliferative effect. Interacts with host LDLR. Interacts with the host extracellular matrix metalloproteinase MMP1. Interacts with host PRMT6; this interaction mediates Tat's methylation. Interacts with, and is ubiquitinated by MDM2/Hdm2. Interacts with host PSMC3 and HTATIP2. Interacts with STAB1; this interaction may overcome SATB1-mediated repression of IL2 and IL2RA (interleukin) in T cells by binding to the same domain than HDAC1. Interacts (when acetylated) with human CDK13, thereby increasing HIV-1 mRNA splicing and promoting the production of the doubly spliced HIV-1 protein Nef. Interacts with host TBP; this interaction modulates the activity of transcriptional pre-initiation complex. Interacts with host RELA. Interacts with host PLSCR1; this interaction negatively regulates Tat transactivation activity by altering its subcellular distribution. Asymmetrical arginine methylation by host PRMT6 seems to diminish the transactivation capacity of Tat and affects the interaction with host CCNT1. Post-translationally, acetylation by EP300, CREBBP, GCN5L2/GCN5 and PCAF regulates the transactivation activity of Tat. EP300-mediated acetylation of Lys-50 promotes dissociation of Tat from the TAR RNA through the competitive binding to PCAF's bromodomain. In addition, the non-acetylated Tat's N-terminus can also interact with PCAF. PCAF-mediated acetylation of Lys-28 enhances Tat's binding to CCNT1. Lys-50 is deacetylated by SIRT1. In terms of processing, polyubiquitination by host MDM2 does not target Tat to degradation, but activates its transactivation function and fosters interaction with CCNT1 and TAR RNA. Phosphorylated by EIF2AK2 on serine and threonine residues adjacent to the basic region important for TAR RNA binding and function. Phosphorylation of Tat by EIF2AK2 is dependent on the prior activation of EIF2AK2 by dsRNA.

It is found in the host nucleus. It localises to the host nucleolus. The protein localises to the host cytoplasm. The protein resides in the secreted. Functionally, transcriptional activator that increases RNA Pol II processivity, thereby increasing the level of full-length viral transcripts. Recognizes a hairpin structure at the 5'-LTR of the nascent viral mRNAs referred to as the transactivation responsive RNA element (TAR) and recruits the cyclin T1-CDK9 complex (P-TEFb complex) that will in turn hyperphosphorylate the RNA polymerase II to allow efficient elongation. The CDK9 component of P-TEFb and other Tat-activated kinases hyperphosphorylate the C-terminus of RNA Pol II that becomes stabilized and much more processive. Other factors such as HTATSF1/Tat-SF1, SUPT5H/SPT5, and HTATIP2 are also important for Tat's function. Besides its effect on RNA Pol II processivity, Tat induces chromatin remodeling of proviral genes by recruiting the histone acetyltransferases (HATs) CREBBP, EP300 and PCAF to the chromatin. This also contributes to the increase in proviral transcription rate, especially when the provirus integrates in transcriptionally silent region of the host genome. To ensure maximal activation of the LTR, Tat mediates nuclear translocation of NF-kappa-B by interacting with host RELA. Through its interaction with host TBP, Tat may also modulate transcription initiation. Tat can reactivate a latently infected cell by penetrating in it and transactivating its LTR promoter. In the cytoplasm, Tat is thought to act as a translational activator of HIV-1 mRNAs. Extracellular circulating Tat can be endocytosed by surrounding uninfected cells via the binding to several surface receptors such as CD26, CXCR4, heparan sulfate proteoglycans (HSPG) or LDLR. Neurons are rarely infected, but they internalize Tat via their LDLR. Through its interaction with nuclear HATs, Tat is potentially able to control the acetylation-dependent cellular gene expression. Modulates the expression of many cellular genes involved in cell survival, proliferation or in coding for cytokines or cytokine receptors. Tat plays a role in T-cell and neurons apoptosis. Tat induced neurotoxicity and apoptosis probably contribute to neuroAIDS. Circulating Tat also acts as a chemokine-like and/or growth factor-like molecule that binds to specific receptors on the surface of the cells, affecting many cellular pathways. In the vascular system, Tat binds to ITGAV/ITGB3 and ITGA5/ITGB1 integrins dimers at the surface of endothelial cells and competes with bFGF for heparin-binding sites, leading to an excess of soluble bFGF. This Human immunodeficiency virus type 1 group M subtype H (isolate VI991) (HIV-1) protein is Protein Tat.